We begin with the raw amino-acid sequence, 471 residues long: Tetratricopeptide repeat protein 29 (471 aa).

TPR repeat units lie at residues 92–131 (DKLREAAQARSLFWLQRPLEDQPDKLDNFYHYLTKAEAAE), 136–173 (YEEVYNNLYALACYFDNSEDKWVRNHFYERCFKIAQLI), 182–215 (AEAEAHMGLLYEEEGELLKAAEHYEAFHELTQGR), 234–267 (VRTYRLLSDRMLQNRDYKQAIKILIKASEIAREG), 274–307 (GEASYYLGLAHLASGEYETALSVLDRYSEISTSL), 314–347 (GRAYEAMAKVLQSQGEMTEAIKYLEKFVVIARNN), and 354–387 (IQACTMLGDIYNEKGQYNKASDYFQQAFSTAMEV).

Its subcellular location is the cytoplasm. It is found in the cytoskeleton. The protein localises to the flagellum axoneme. In terms of biological role, axonemal protein which is implicated in axonemal and/or peri-axonemal structure assembly and regulates flagellum assembly and beating and therefore sperm motility. The polypeptide is Tetratricopeptide repeat protein 29 (Ttc29) (Rattus norvegicus (Rat)).